Consider the following 410-residue polypeptide: E3 SUMO-protein ligase EGR2 (410 aa).

Low complexity predominate over residues 68–83 (PPASTTASSSVTSASP). Disordered regions lie at residues 68–95 (PPASTTASSSVTSASPNPLATGPLGVCT), 101–120 (PELDHLYSPPPPPPPYSGCT), and 127–151 (PSAFLSPPTTSTSSLAYQPPPSYPS). An HCFC1-binding-motif (HBM) motif is present at residues 104–107 (DHLY). The segment covering 127 to 143 (PSAFLSPPTTSTSSLAY) has biased composition (low complexity). K188 is subject to N6-acetyllysine. The tract at residues 217–286 (PSAGVTGPGA…PYPCPAEGCD (70 aa)) is disordered. Residues 222–231 (TGPGASGGSE) show a composition bias toward gly residues. Residues 237–248 (GSGSAAVTTSPY) show a composition bias toward polar residues. C2H2-type zinc fingers lie at residues 278–302 (YPCPAEGCDRRFSRSDELTRHIRIH), 308–330 (FQCRICMRNFSRSDHLTTHIRTH), and 336–358 (FACDYCGRKFARSDERKRHTKIH). The segment at 349 to 410 (DERKRHTKIH…LACTSRTRTP (62 aa)) is disordered. Basic residues predominate over residues 353–363 (RHTKIHLRQKE). Residues 367–380 (SAPSSSASAQPSAS) are compositionally biased toward low complexity.

Belongs to the EGR C2H2-type zinc-finger protein family. Interacts with HCFC1. Interacts with WWP2. Interacts with UBC9. Interacts with CITED1. Interacts (via phosphorylated form) with SFN. In terms of processing, ubiquitinated by WWP2 leading to proteasomal degradation. Post-translationally, acetylated. May be deacetylated by HDAC6, HDAC10 or SIRT1.

It localises to the nucleus. It participates in protein modification; protein sumoylation. Functionally, sequence-specific DNA-binding transcription factor. Plays a role in hindbrain segmentation by regulating the expression of a subset of homeobox containing genes and in Schwann cell myelination by regulating the expression of genes involved in the formation and maintenance of myelin. Binds to two EGR2-consensus sites EGR2A (5'-CTGTAGGAG-3') and EGR2B (5'-ATGTAGGTG-3') in the HOXB3 enhancer and promotes HOXB3 transcriptional activation. Binds to specific DNA sites located in the promoter region of HOXA4, HOXB2 and ERBB2. Regulates hindbrain segmentation by controlling the expression of Hox genes, such as HOXA4, HOXB3 and HOXB2, and thereby specifying odd and even rhombomeres. Promotes the expression of HOXB3 in the rhombomere r5 in the hindbrain. Regulates myelination in the peripheral nervous system after birth, possibly by regulating the expression of myelin proteins, such as MPZ, and by promoting the differentiation of Schwann cells. Involved in the development of the jaw openener musculature, probably by playing a role in its innervation through trigeminal motor neurons. May play a role in adipogenesis, possibly by regulating the expression of CEBPB. In terms of biological role, E3 SUMO-protein ligase helping SUMO1 conjugation to its coregulators NAB1 and NAB2, whose sumoylation down-regulates EGR2 transcriptional activity. The protein is E3 SUMO-protein ligase EGR2 (EGR2) of Cricetulus griseus (Chinese hamster).